Consider the following 167-residue polypeptide: Endoribonuclease YbeY (167 aa).

Zn(2+) contacts are provided by His-131, His-135, and His-141.

This sequence belongs to the endoribonuclease YbeY family. It depends on Zn(2+) as a cofactor.

The protein resides in the cytoplasm. Functionally, single strand-specific metallo-endoribonuclease involved in late-stage 70S ribosome quality control and in maturation of the 3' terminus of the 16S rRNA. The chain is Endoribonuclease YbeY from Rickettsia africae (strain ESF-5).